The following is a 310-amino-acid chain: uncharacterized protein (310 aa).

Residues 1–11 (MKVKSILKHSR) are compositionally biased toward basic residues. 2 disordered regions span residues 1 to 227 (MKVK…SDHA) and 242 to 310 (AMEE…NENE). Positions 12–50 (MSSPSLETDSMESGQQQNMVSSTPSIDMNESDCSGTGTP) are enriched in polar residues. Residues 51-80 (SEERIRRLRWDEENLSKAEQQKSAKMKITE) are compositionally biased toward basic and acidic residues. Positions 91-105 (PDDEVPEINLDETDS) are enriched in acidic residues. The segment covering 110–121 (TAGTLGDTLGTL) has biased composition (low complexity). 2 stretches are compositionally biased toward basic and acidic residues: residues 126 to 150 (VSKD…KKEP) and 182 to 195 (LPSK…ETKP). Residues 242-253 (AMEEEALSEAEE) are compositionally biased toward acidic residues. The segment covering 254-265 (NIPKKKPDFNEL) has biased composition (basic and acidic residues). Ser285 is modified (phosphoserine). The segment covering 297–310 (DSGSASDVNMNENE) has biased composition (polar residues).

This is an uncharacterized protein from Schizosaccharomyces pombe (strain 972 / ATCC 24843) (Fission yeast).